A 237-amino-acid chain; its full sequence is Ribosomal RNA small subunit methyltransferase G (237 aa).

Residues Gly-76, Phe-81, 99 to 101 (DSS), 128 to 129 (IE), and Arg-147 contribute to the S-adenosyl-L-methionine site.

It belongs to the methyltransferase superfamily. RNA methyltransferase RsmG family.

It is found in the cytoplasm. Functionally, specifically methylates the N7 position of a guanine in 16S rRNA. This Prochlorococcus marinus (strain MIT 9312) protein is Ribosomal RNA small subunit methyltransferase G.